The sequence spans 631 residues: Probable electron transfer flavoprotein-ubiquinone oxidoreductase, mitochondrial (631 aa).

65 to 79 serves as a coordination point for FAD; the sequence is VCIVGGGPAGLATAI. Residues cysteine 574, cysteine 600, cysteine 603, and cysteine 606 each coordinate [4Fe-4S] cluster. Positions 591-620 constitute a 4Fe-4S ferredoxin-type domain; it reads TRLQINSQNCIHCKTCDIKAPRQDITWKVP.

This sequence belongs to the ETF-QO/FixC family. [4Fe-4S] cluster serves as cofactor. The cofactor is FAD.

The protein localises to the mitochondrion inner membrane. It catalyses the reaction a ubiquinone + reduced [electron-transfer flavoprotein] = a ubiquinol + oxidized [electron-transfer flavoprotein] + H(+). Accepts electrons from ETF and reduces ubiquinone. The chain is Probable electron transfer flavoprotein-ubiquinone oxidoreductase, mitochondrial (CIR2) from Saccharomyces cerevisiae (strain ATCC 204508 / S288c) (Baker's yeast).